Reading from the N-terminus, the 214-residue chain is Adenylate kinase (214 aa).

Residue G10–T15 participates in ATP binding. An NMP region spans residues S30–V59. Residues T31, R36, Q57–V59, G85–R88, and Q92 each bind AMP. Positions G122–D159 are LID. ATP-binding positions include R123 and T132–Y133. Residues R156 and R167 each coordinate AMP. G200 contacts ATP.

This sequence belongs to the adenylate kinase family. As to quaternary structure, monomer.

The protein resides in the cytoplasm. The catalysed reaction is AMP + ATP = 2 ADP. The protein operates within purine metabolism; AMP biosynthesis via salvage pathway; AMP from ADP: step 1/1. Catalyzes the reversible transfer of the terminal phosphate group between ATP and AMP. Plays an important role in cellular energy homeostasis and in adenine nucleotide metabolism. The sequence is that of Adenylate kinase from Methylococcus capsulatus (strain ATCC 33009 / NCIMB 11132 / Bath).